A 192-amino-acid polypeptide reads, in one-letter code: dITP/XTP pyrophosphatase (192 aa).

Threonine 12–lysine 17 contributes to the substrate binding site. Residues glutamate 41 and aspartate 70 each coordinate Mg(2+). Aspartate 70 (proton acceptor) is an active-site residue. Residues serine 71, phenylalanine 145–aspartate 148, lysine 168, and histidine 173–arginine 174 contribute to the substrate site.

Belongs to the HAM1 NTPase family. Homodimer. Mg(2+) serves as cofactor.

It carries out the reaction XTP + H2O = XMP + diphosphate + H(+). The enzyme catalyses dITP + H2O = dIMP + diphosphate + H(+). It catalyses the reaction ITP + H2O = IMP + diphosphate + H(+). Its function is as follows. Pyrophosphatase that catalyzes the hydrolysis of nucleoside triphosphates to their monophosphate derivatives, with a high preference for the non-canonical purine nucleotides XTP (xanthosine triphosphate), dITP (deoxyinosine triphosphate) and ITP. Seems to function as a house-cleaning enzyme that removes non-canonical purine nucleotides from the nucleotide pool, thus preventing their incorporation into DNA/RNA and avoiding chromosomal lesions. The polypeptide is dITP/XTP pyrophosphatase (Saccharolobus solfataricus (strain ATCC 35092 / DSM 1617 / JCM 11322 / P2) (Sulfolobus solfataricus)).